A 194-amino-acid chain; its full sequence is GTP cyclohydrolase-2 (194 aa).

47–51 (RVHSE) is a GTP binding site. Residues cysteine 52, cysteine 63, and cysteine 65 each coordinate Zn(2+). GTP is bound by residues glutamine 68, 90–92 (EGR), and threonine 112. Aspartate 124 functions as the Proton acceptor in the catalytic mechanism. The Nucleophile role is filled by arginine 126. Positions 147 and 152 each coordinate GTP.

This sequence belongs to the GTP cyclohydrolase II family. In terms of assembly, homodimer. Zn(2+) is required as a cofactor.

It catalyses the reaction GTP + 4 H2O = 2,5-diamino-6-hydroxy-4-(5-phosphoribosylamino)-pyrimidine + formate + 2 phosphate + 3 H(+). The protein operates within cofactor biosynthesis; riboflavin biosynthesis; 5-amino-6-(D-ribitylamino)uracil from GTP: step 1/4. In terms of biological role, catalyzes the conversion of GTP to 2,5-diamino-6-ribosylamino-4(3H)-pyrimidinone 5'-phosphate (DARP), formate and pyrophosphate. This is GTP cyclohydrolase-2 from Buchnera aphidicola subsp. Acyrthosiphon pisum (strain APS) (Acyrthosiphon pisum symbiotic bacterium).